A 663-amino-acid polypeptide reads, in one-letter code: MNKLNLGILAHVDAGKTSLTERLLHRTGVIDEVGSVDAGTTTTDSMELERQRGITIRSAVATFVLDDLKVNLIDTPGHSDFISEVERALGVLDGAVLVVSAVEGVQPQTRILMRTLRRLGIPTLVFVNKIDRGGARPDGVLREIRDRLTPAAVALSAVADAGTPRARAIALGPDTDPDFAVRVGELLADHDDAFLTAYLDEEHVLTEKEYAEELAAQTARGLVHPVYFGSALTGEGLDHLVHGIRELLPSVHASQDAPLRATVFKVDRGARGEAVAYLRLVSGTLGTRDSVTLHRVDHTGRVTEHAGRITALRVFEHGSATSETRATAGDIAQAWGLKDVRVGDRAGHLDGPPPRNFFAPPSLETVIRPERPEEAGRLHAALRMLDEQDPSIDLRQDEENAAGAVVRLYGEVQKEILGSTLAESFGVRVRFDPTRTVCIEKPVGTGEALIELDTRTHNYFWGAPWVCASDRPSPARAITFRLAVELGSLPLAFHKAIEETVHTTLRHGLYGWQVTDCAVTLTRTGVRSPVSAADDFRKANARLVLMDALGRAGTEVHEPVSSFELEVPAARLSPVLAKLAELGATPGVPTAEGDVFRLEGTMPTSLVHDFNQRVPGLTQGEGVFLAEHRGYRPAVGQPPVRPRPEGPNPLNRDEYILHVLKRV.

Positions 1-252 (MNKLNLGILA…GIRELLPSVH (252 aa)) constitute a tr-type G domain. Residues 10 to 17 (AHVDAGKT), 74 to 78 (DTPGH), and 128 to 131 (NKID) contribute to the GTP site.

Belongs to the TRAFAC class translation factor GTPase superfamily. Classic translation factor GTPase family. TetM/TetO subfamily.

In terms of biological role, abolishes the inhibitory effect of oxytetracycline on protein synthesis by a non-covalent modification of the ribosomes. The chain is Oxytetracycline resistance protein (otrA) from Streptomyces rimosus.